The chain runs to 461 residues: ATP synthase subunit beta (461 aa).

Position 151–158 (Gly-151–Thr-158) interacts with ATP.

It belongs to the ATPase alpha/beta chains family. F-type ATPases have 2 components, CF(1) - the catalytic core - and CF(0) - the membrane proton channel. CF(1) has five subunits: alpha(3), beta(3), gamma(1), delta(1), epsilon(1). CF(0) has three main subunits: a(1), b(2) and c(9-12). The alpha and beta chains form an alternating ring which encloses part of the gamma chain. CF(1) is attached to CF(0) by a central stalk formed by the gamma and epsilon chains, while a peripheral stalk is formed by the delta and b chains.

The protein resides in the cell inner membrane. It catalyses the reaction ATP + H2O + 4 H(+)(in) = ADP + phosphate + 5 H(+)(out). Produces ATP from ADP in the presence of a proton gradient across the membrane. The catalytic sites are hosted primarily by the beta subunits. The protein is ATP synthase subunit beta of Coxiella burnetii (strain Dugway 5J108-111).